The chain runs to 907 residues: Probable dipeptidyl-aminopeptidase B (907 aa).

Residues 1 to 26 show a composition bias toward basic and acidic residues; sequence MPRQRAPKEEEAELLTKQERSTRSSE. Residues 1–70 form a disordered region; sequence MPRQRAPKEE…EKYTDEDDEA (70 aa). Over 1–93 the chain is Cytoplasmic; the sequence is MPRQRAPKEE…PVAVDKKTRR (93 aa). The segment covering 30-44 has biased composition (low complexity); sequence DASVSSISTTSLVLE. Residues 94-114 form a helical; Signal-anchor for type II membrane protein membrane-spanning segment; sequence WLWIVGIACVTGWALALVFFL. At 115–907 the chain is on the vacuolar side; the sequence is MSGSYKHVST…SQVDARLERR (793 aa). Asn-560 carries an N-linked (GlcNAc...) asparagine glycan. Residue Ser-751 is the Charge relay system of the active site. An N-linked (GlcNAc...) asparagine glycan is attached at Asn-805. Catalysis depends on charge relay system residues Asp-828 and His-861.

It belongs to the peptidase S9B family.

The protein resides in the vacuole membrane. The catalysed reaction is Release of an N-terminal dipeptide, Xaa-Yaa-|-Zaa-, from a polypeptide, preferentially when Yaa is Pro, provided Zaa is neither Pro nor hydroxyproline.. Its function is as follows. Type IV dipeptidyl-peptidase which removes N-terminal dipeptides sequentially from polypeptides having unsubstituted N-termini provided that the penultimate residue is proline. This Pyrenophora teres f. teres (strain 0-1) (Barley net blotch fungus) protein is Probable dipeptidyl-aminopeptidase B (dapB).